The chain runs to 226 residues: DNA mismatch repair protein MutH (226 aa).

Belongs to the MutH family.

The protein localises to the cytoplasm. In terms of biological role, sequence-specific endonuclease that cleaves unmethylated GATC sequences. It is involved in DNA mismatch repair. This is DNA mismatch repair protein MutH from Haemophilus ducreyi (strain 35000HP / ATCC 700724).